The chain runs to 224 residues: 2-C-methyl-D-erythritol 4-phosphate cytidylyltransferase (224 aa).

It belongs to the IspD/TarI cytidylyltransferase family. IspD subfamily.

It carries out the reaction 2-C-methyl-D-erythritol 4-phosphate + CTP + H(+) = 4-CDP-2-C-methyl-D-erythritol + diphosphate. It functions in the pathway isoprenoid biosynthesis; isopentenyl diphosphate biosynthesis via DXP pathway; isopentenyl diphosphate from 1-deoxy-D-xylulose 5-phosphate: step 2/6. In terms of biological role, catalyzes the formation of 4-diphosphocytidyl-2-C-methyl-D-erythritol from CTP and 2-C-methyl-D-erythritol 4-phosphate (MEP). This Bordetella petrii (strain ATCC BAA-461 / DSM 12804 / CCUG 43448) protein is 2-C-methyl-D-erythritol 4-phosphate cytidylyltransferase.